Consider the following 221-residue polypeptide: Sugar transporter SWEET1 (221 aa).

7 consecutive transmembrane segments (helical) span residues 3-23 (AGGVADSFLSSACVLFTLGMF), 43-63 (QFLPFLTTDVNNLSWLSYGVL), 68-88 (TLIIVNSVGAVLQTLYILAYL), 102-122 (ATLLAVLLLGYGYFWLLVPDL), 129-149 (LGLFCSVFTISMYLSPLADLA), 160-180 (LSFSLTIATLFCSASWSIYGF), and 186-206 (YITVPNLPGILTSLIRLGLFC). In terms of domain architecture, MtN3/slv 1 spans 10–94 (FLSSACVLFT…LAYLHYSPQK (85 aa)). One can recognise a MtN3/slv 2 domain in the interval 127–212 (QQLGLFCSVF…GLFCKYPPEQ (86 aa)). Residues 149–221 (AKIVQTKSTQ…QDRKYRLLQT (73 aa)) are mediates interaction with TRPV2.

Belongs to the SWEET sugar transporter family. In terms of assembly, interacts with TRPV2; the interaction probably occurs intracellularly and depends on TRPV2 N-glycosylation. As to expression, expressed at high levels in lung, placenta, spleen and thymus, at intermediate levels in brain, heart, kidney and testis, and at low levels in bone marrow, liver and lymph node. Within the thymus expression is highest in non-lymphoid cells.

Its subcellular location is the golgi apparatus membrane. It is found in the cell membrane. Functionally, mediates sugar transport across membranes. May regulate the expression of RAG1 a gene involved in V(D)J recombination. The polypeptide is Sugar transporter SWEET1 (Slc50a1) (Mus musculus (Mouse)).